Here is a 222-residue protein sequence, read N- to C-terminus: Glutathione S-transferase A4 (222 aa).

At M1 the chain carries N-acetylmethionine. One can recognise a GST N-terminal domain in the interval 3 to 83 (ARPKLHYPNG…YIADKHNLFG (81 aa)). Glutathione contacts are provided by residues Y9, 54–55 (QV), and 67–68 (QT). One can recognise a GST C-terminal domain in the interval 85 to 208 (NLKERTLIDM…EPGSKKKPPP (124 aa)). Residue Y212 participates in substrate binding.

The protein belongs to the GST superfamily. Alpha family. Homodimer. Expressed at a high level in brain, placenta, and skeletal muscle and much lower in lung and liver.

The protein localises to the cytoplasm. The catalysed reaction is RX + glutathione = an S-substituted glutathione + a halide anion + H(+). In terms of biological role, conjugation of reduced glutathione to a wide number of exogenous and endogenous hydrophobic electrophiles. This isozyme has a high catalytic efficiency with 4-hydroxyalkenals such as 4-hydroxynonenal (4-HNE). The sequence is that of Glutathione S-transferase A4 (GSTA4) from Homo sapiens (Human).